The chain runs to 393 residues: NAD(P)H-quinone oxidoreductase subunit H, chloroplastic (393 aa).

It belongs to the complex I 49 kDa subunit family. NDH is composed of at least 16 different subunits, 5 of which are encoded in the nucleus.

The protein localises to the plastid. It is found in the chloroplast thylakoid membrane. The enzyme catalyses a plastoquinone + NADH + (n+1) H(+)(in) = a plastoquinol + NAD(+) + n H(+)(out). It catalyses the reaction a plastoquinone + NADPH + (n+1) H(+)(in) = a plastoquinol + NADP(+) + n H(+)(out). Its function is as follows. NDH shuttles electrons from NAD(P)H:plastoquinone, via FMN and iron-sulfur (Fe-S) centers, to quinones in the photosynthetic chain and possibly in a chloroplast respiratory chain. The immediate electron acceptor for the enzyme in this species is believed to be plastoquinone. Couples the redox reaction to proton translocation, and thus conserves the redox energy in a proton gradient. The protein is NAD(P)H-quinone oxidoreductase subunit H, chloroplastic of Ipomoea purpurea (Common morning glory).